We begin with the raw amino-acid sequence, 161 residues long: Large ribosomal subunit protein uL15 (161 aa).

The tract at residues 1 to 43 (MKLSDIADNAGSRKKRMRIGRGIGSGKGKTGGRGGKGQTARSG) is disordered. The span at 21 to 37 (RGIGSGKGKTGGRGGKG) shows a compositional bias: gly residues.

Belongs to the universal ribosomal protein uL15 family. Part of the 50S ribosomal subunit.

Its function is as follows. Binds to the 23S rRNA. The sequence is that of Large ribosomal subunit protein uL15 from Nitrobacter hamburgensis (strain DSM 10229 / NCIMB 13809 / X14).